Reading from the N-terminus, the 360-residue chain is Protein phosphatase 1 regulatory subunit 7 (360 aa).

A disordered region spans residues 1–64; sequence MAAERGAGQQ…GEEDPEEEHE (64 aa). Position 2 is an N-acetylalanine (A2). A phosphoserine mark is found at S12, S24, S27, S44, and S47. Over residues 17-34 the composition is skewed to basic and acidic residues; sequence EVDRRVESEESGDEEGKK. A compositionally biased stretch (acidic residues) spans 53–63; sequence ERGEEDPEEEH. 11 LRR repeats span residues 77-98, 99-120, 121-142, 143-164, 165-186, 187-208, 209-230, 231-252, 253-274, 275-296, and 297-318; these read DAED…EVLK, KVKT…EELQ, SLRE…EALT, ELEI…DKVT, QLKK…SNLH, QLQM…DTLT, NLES…DALT, NLTV…QNLV, NLQE…ENNN, KLTM…SHLT, and EPQE…DELK. S322 carries the post-translational modification Phosphoserine. The 30-residue stretch at 331–360 folds into the LRRCT domain; the sequence is NPLQKDPQYRRKVMLALPSVRQIDATFVRF.

Belongs to the SDS22 family. Interacts with PPP1CA, PPP1CB and PPP1CC/PPP1G.

The protein localises to the nucleus. Functionally, regulatory subunit of protein phosphatase 1. The polypeptide is Protein phosphatase 1 regulatory subunit 7 (PPP1R7) (Pongo abelii (Sumatran orangutan)).